The sequence spans 326 residues: MIKIGNIELSSNIILAPMSGVTDLEFRRLVKRFGAGLVVSEMIASRAMIVESRQSLQKCSIMQDDATSACVQLAGCEPNVIAEAAKMNEDMGAKIIDLNFGCPAKKVVNGYSGSALMRDEGLAAKIFEAAVKAVKIPVTVKMRMGWDDQTKNAPTLAKIAERSGIQMVTVHGRTRCQFYSGNADWEFIKNVKEAVKIPVIANGDITNFAKAKEALEKSSADGVMVGRGAYGKPWLISQIDHYLKTGEEKPAPSIESQLDIVLEHYQAIVDYYGESAGVPIARKHMGWYSSGLPNSAEFRGAVNLMNDPIAVKDKIVEFYTSVINRE.

FMN-binding positions include 17–19 and glutamine 72; that span reads PMS. Cysteine 102 functions as the Proton donor in the catalytic mechanism. FMN is bound by residues lysine 141, 202 to 204, and 226 to 227; these read NGD and GR.

The protein belongs to the Dus family. FMN is required as a cofactor.

It catalyses the reaction a 5,6-dihydrouridine in tRNA + NAD(+) = a uridine in tRNA + NADH + H(+). The catalysed reaction is a 5,6-dihydrouridine in tRNA + NADP(+) = a uridine in tRNA + NADPH + H(+). Catalyzes the synthesis of 5,6-dihydrouridine (D), a modified base found in the D-loop of most tRNAs, via the reduction of the C5-C6 double bond in target uridines. The protein is Probable tRNA-dihydrouridine synthase (dus) of Rickettsia bellii (strain RML369-C).